The following is a 381-amino-acid chain: Dual-specificity RNA methyltransferase RlmN (381 aa).

Residue Glu-96 is the Proton acceptor of the active site. Positions 102–342 (TDDRGTLCVS…TRTTRGDDID (241 aa)) constitute a Radical SAM core domain. The cysteines at positions 109 and 345 are disulfide-linked. The [4Fe-4S] cluster site is built by Cys-116, Cys-120, and Cys-123. Residues 170-171 (GE), Ser-202, 224-226 (SLH), and Asn-302 contribute to the S-adenosyl-L-methionine site. Cys-345 functions as the S-methylcysteine intermediate in the catalytic mechanism.

Belongs to the radical SAM superfamily. RlmN family. [4Fe-4S] cluster serves as cofactor.

The protein localises to the cytoplasm. The enzyme catalyses adenosine(2503) in 23S rRNA + 2 reduced [2Fe-2S]-[ferredoxin] + 2 S-adenosyl-L-methionine = 2-methyladenosine(2503) in 23S rRNA + 5'-deoxyadenosine + L-methionine + 2 oxidized [2Fe-2S]-[ferredoxin] + S-adenosyl-L-homocysteine. The catalysed reaction is adenosine(37) in tRNA + 2 reduced [2Fe-2S]-[ferredoxin] + 2 S-adenosyl-L-methionine = 2-methyladenosine(37) in tRNA + 5'-deoxyadenosine + L-methionine + 2 oxidized [2Fe-2S]-[ferredoxin] + S-adenosyl-L-homocysteine. Its function is as follows. Specifically methylates position 2 of adenine 2503 in 23S rRNA and position 2 of adenine 37 in tRNAs. m2A2503 modification seems to play a crucial role in the proofreading step occurring at the peptidyl transferase center and thus would serve to optimize ribosomal fidelity. The polypeptide is Dual-specificity RNA methyltransferase RlmN (Pseudomonas putida (strain W619)).